The following is a 346-amino-acid chain: Sensor protein kinase GraS (346 aa).

The next 2 membrane-spanning stretches (helical) occupy residues I18–F38 and L43–F63. The Histidine kinase domain occupies E126–N332.

As to quaternary structure, interacts with GraX.

The protein localises to the cell membrane. It carries out the reaction ATP + protein L-histidine = ADP + protein N-phospho-L-histidine.. In terms of biological role, member of the two-component regulatory system GraR/GraS involved in resistance against cationic antimicrobial peptides (CAMPs). Functions as a sensor protein kinase which phosphorylates GraR through the auxiliary protein GraX. In turn, GraR up-regulates many genes such as adhesins, exoproteins, transporters, toxins, and proteins involved in cell wall synthesis. Down-regulates the expression of many genes involved in RNA and amino acid synthesis or glycolysis. The sequence is that of Sensor protein kinase GraS (graS) from Staphylococcus aureus (strain MRSA252).